Reading from the N-terminus, the 156-residue chain is Small ribosomal subunit protein uS7 (156 aa).

It belongs to the universal ribosomal protein uS7 family. Part of the 30S ribosomal subunit. Contacts proteins S9 and S11.

Functionally, one of the primary rRNA binding proteins, it binds directly to 16S rRNA where it nucleates assembly of the head domain of the 30S subunit. Is located at the subunit interface close to the decoding center, probably blocks exit of the E-site tRNA. This chain is Small ribosomal subunit protein uS7, found in Bradyrhizobium diazoefficiens (strain JCM 10833 / BCRC 13528 / IAM 13628 / NBRC 14792 / USDA 110).